The following is a 74-amino-acid chain: Anaphase-promoting complex subunit 13 (74 aa).

Residues 33-53 (LNELPEPEQDNGGTTESVKEQ) form a disordered region.

It belongs to the APC13 family. As to quaternary structure, the mammalian APC/C is composed at least of 14 distinct subunits ANAPC1, ANAPC2, CDC27/APC3, ANAPC4, ANAPC5, CDC16/APC6, ANAPC7, CDC23/APC8, ANAPC10, ANAPC11, CDC26/APC12, ANAPC13, ANAPC15 and ANAPC16 that assemble into a complex of at least 19 chains with a combined molecular mass of around 1.2 MDa; APC/C interacts with FZR1 and FBXO5.

The protein localises to the nucleus. It functions in the pathway protein modification; protein ubiquitination. In terms of biological role, component of the anaphase promoting complex/cyclosome (APC/C), a cell cycle-regulated E3 ubiquitin ligase that controls progression through mitosis and the G1 phase of the cell cycle. The APC/C complex acts by mediating ubiquitination and subsequent degradation of target proteins: it mainly mediates the formation of 'Lys-11'-linked polyubiquitin chains and, to a lower extent, the formation of 'Lys-48'- and 'Lys-63'-linked polyubiquitin chains. The APC/C complex catalyzes assembly of branched 'Lys-11'-/'Lys-48'-linked branched ubiquitin chains on target proteins. The protein is Anaphase-promoting complex subunit 13 (ANAPC13) of Bos taurus (Bovine).